Reading from the N-terminus, the 508-residue chain is Light-independent protochlorophyllide reductase subunit B (508 aa).

Position 36 (Asp36) interacts with [4Fe-4S] cluster. Asp294 acts as the Proton donor in catalysis. A substrate-binding site is contributed by 429–430 (GM).

This sequence belongs to the ChlB/BchB/BchZ family. In terms of assembly, protochlorophyllide reductase is composed of three subunits; ChlL, ChlN and ChlB. Forms a heterotetramer of two ChlB and two ChlN subunits. [4Fe-4S] cluster is required as a cofactor.

It carries out the reaction chlorophyllide a + oxidized 2[4Fe-4S]-[ferredoxin] + 2 ADP + 2 phosphate = protochlorophyllide a + reduced 2[4Fe-4S]-[ferredoxin] + 2 ATP + 2 H2O. It functions in the pathway porphyrin-containing compound metabolism; chlorophyll biosynthesis (light-independent). In terms of biological role, component of the dark-operative protochlorophyllide reductase (DPOR) that uses Mg-ATP and reduced ferredoxin to reduce ring D of protochlorophyllide (Pchlide) to form chlorophyllide a (Chlide). This reaction is light-independent. The NB-protein (ChlN-ChlB) is the catalytic component of the complex. In Gloeothece citriformis (strain PCC 7424) (Cyanothece sp. (strain PCC 7424)), this protein is Light-independent protochlorophyllide reductase subunit B.